We begin with the raw amino-acid sequence, 239 residues long: Phosducin-like protein 3 (239 aa).

Met-1 carries the post-translational modification N-acetylmethionine. In terms of domain architecture, Phosducin spans 32–180; the sequence is EAEEEQRILQ…EGDIKAQFIG (149 aa). Phosphoserine occurs at positions 43, 234, and 236. The segment at 91-239 is thioredoxin fold; it reads FGEVLEISGK…MKRDSDSEGD (149 aa).

The protein belongs to the phosducin family. In terms of assembly, interacts (via thioredoxin fold region) with KDR/VEGFR2 (via juxtamembrane domain). Forms ternary complexes with the chaperonin CCT complex and actin substrate, leading to inhibition of actin folding. Interacts with XIAP (via BIR 3 and RING domain). Interacts with HSP90AA1 and HSP90AB1. N-terminal methionine acetylation destabilizes the protein.

It is found in the cytoplasm. It localises to the perinuclear region. Its subcellular location is the endoplasmic reticulum. Functionally, acts as a chaperone for the angiogenic VEGF receptor KDR/VEGFR2, increasing its abundance by inhibiting its ubiquitination and degradation. Inhibits the folding activity of the chaperonin-containing T-complex (CCT) which leads to inhibition of cytoskeletal actin folding. Acts as a chaperone during heat shock alongside HSP90 and HSP40/70 chaperone complexes. Modulates the activation of caspases during apoptosis. The sequence is that of Phosducin-like protein 3 (PDCL3) from Pongo abelii (Sumatran orangutan).